The sequence spans 725 residues: Methionine--tRNA ligase (725 aa).

Positions 27–37 match the 'HIGH' region motif; that stretch reads PYANGQIHIGH. Residues C158, C161, C171, and C174 each coordinate Zn(2+). The 'KMSKS' region motif lies at 348 to 352; it reads KMSKS. Residue K351 participates in ATP binding. The 107-residue stretch at 619 to 725 folds into the tRNA-binding domain; the sequence is DFAKIDLRIA…SGAKPGMRVK (107 aa).

Belongs to the class-I aminoacyl-tRNA synthetase family. MetG type 1 subfamily. As to quaternary structure, homodimer. It depends on Zn(2+) as a cofactor.

It localises to the cytoplasm. The catalysed reaction is tRNA(Met) + L-methionine + ATP = L-methionyl-tRNA(Met) + AMP + diphosphate. Its function is as follows. Is required not only for elongation of protein synthesis but also for the initiation of all mRNA translation through initiator tRNA(fMet) aminoacylation. This is Methionine--tRNA ligase from Burkholderia pseudomallei (strain 668).